The chain runs to 243 residues: Probable transcriptional regulatory protein Smal_3128 (243 aa).

The protein belongs to the TACO1 family.

It is found in the cytoplasm. The sequence is that of Probable transcriptional regulatory protein Smal_3128 from Stenotrophomonas maltophilia (strain R551-3).